An 875-amino-acid polypeptide reads, in one-letter code: MRLLKYPLDIHNEQVNALAALGPYIILAGSGGHVMAWRQQQLVDTAFDRVMIKDLKPEVSFQVDQDTTGDIFFITGDLETLYIGSEHRLWGYSGWLCRDTNNINSVEKMNSKLLFECKSPSTITDVKYDINLGILFVLLSNENKILLFRHKTFDKLSEITIDKASKPITGIIDPTGQTFTVMTSDRSILVYQINKTGTHKLINKLTQHVQMYPLHYRISMSPQADILPVINSVKGVPNNATSCTALLDRNNNYKVTKTLVTPSSNGCRVLVYSPAFYEKPNLKKGTSTRYNLIATSGSTDGTILVWNTKRMKPLFNALQVSSTAINDMSWSQDGFTLFAISNDATLYTFAFQEKDLGVALPQTEIKSLQEVNKKLPKLEEPLAEQIPKSFPENIKLEESASAAPIPNDIGRSAVGKKPTKKKTANNQTNGIKTIQSTSMEFNTPSYTVPRDLKRKPKEATPSNIAPGSKKQKKELQPIDFLDTGLLLPNTSFSRIRLATPKIRSTFKYSPINNPNLILDVKNGSGNEQRPTIVKLTSKVLDQDQVLFQDFIPKLITICTAGDTFWSFCSEDGSIYIYSDSGRKLMAPLVLGVSISFLEACGTYLLCLTSIGELYCWNIEQKKLAFPTNTIYPLLNPSLRYSDDILTRAENITLCSITKKGVPLVTLSNGDGYLFDKNMETWLLVSDGWWAYGSQYWDTTNTTGLSSSKANTDSFNGSESNINEIVSDIKNDNQSIINFLECKTNDELNRKGRIKNLQRFARTILMKEGFENMEEIVTLSHLENKILISIRLEEPEEFSKLMMVYCIRLSELGYMDRLNDVFQWLYDDLPISGTGSAFADKDFKRNLLKKILIACGDIRQVQRVTTRYAKEMNIIS.

6 WD repeats span residues 10–47, 118–158, 163–201, 237–277, 278–316, and 320–359; these read IHNE…DTAF, KSPS…KLSE, KASK…THKL, PNNA…PAFY, EKPN…PLFN, and VSST…LGVA. The tract at residues 398–473 is disordered; it reads ESASAAPIPN…IAPGSKKQKK (76 aa). Positions 424 to 446 are enriched in polar residues; sequence ANNQTNGIKTIQSTSMEFNTPSY. WD repeat units lie at residues 546–587 and 589–626; these read LFQD…LMAP and VLGV…LAFP. Ser-713 is subject to Phosphoserine.

It belongs to the WD repeat HIR1 family. As to quaternary structure, component of the HIR complex, composed of HIR1, HIR2, HIR3 and HPC2. This complex may consist of one copy of HIR1 and HIR3 and two copies of HIR2 and HPC2. The HIR complex interacts with ASF1. Interacts with SNF2. Interacts with SNF5. Interacts with SWI3. Interacts with RTT106.

Its subcellular location is the nucleus. It localises to the chromosome. In terms of biological role, component of the HIR complex, which cooperates with ASF1 to promote replication-independent chromatin assembly. The HIR complex is also required for the periodic repression of three of the four histone gene loci during the cell cycle as well as for autogenous regulation of the HTA1-HTB1 locus by H2A and H2B. DNA-binding by the HIR complex may repress transcription by inhibiting nucleosome remodeling by the SWI/SNF complex. The HIR complex may also be required for transcriptional silencing of centromeric, telomeric and mating-type loci in the absence of CAF-1. The protein is Protein HIR2 (HIR2) of Saccharomyces cerevisiae (strain ATCC 204508 / S288c) (Baker's yeast).